Consider the following 352-residue polypeptide: Protein YpbB (352 aa).

Interacts with RecS and SSB (ssbA); the 6 C-terminal residues of SSB are required for interaction with YpbB.

It is found in the cytoplasm. It localises to the nucleoid. The chain is Protein YpbB (ypbB) from Bacillus subtilis (strain 168).